A 276-amino-acid chain; its full sequence is NH(3)-dependent NAD(+) synthetase (276 aa).

Residue 43-50 (GISGGVDS) coordinates ATP. D49 lines the Mg(2+) pocket. R146 provides a ligand contact to deamido-NAD(+). T166 serves as a coordination point for ATP. E171 serves as a coordination point for Mg(2+). Deamido-NAD(+)-binding residues include K179 and D186. 2 residues coordinate ATP: K195 and T217. 266 to 267 (HK) contributes to the deamido-NAD(+) binding site.

The protein belongs to the NAD synthetase family. As to quaternary structure, homodimer.

It catalyses the reaction deamido-NAD(+) + NH4(+) + ATP = AMP + diphosphate + NAD(+) + H(+). It participates in cofactor biosynthesis; NAD(+) biosynthesis; NAD(+) from deamido-NAD(+) (ammonia route): step 1/1. Catalyzes the ATP-dependent amidation of deamido-NAD to form NAD. Uses ammonia as a nitrogen source. The protein is NH(3)-dependent NAD(+) synthetase of Aliivibrio fischeri (strain MJ11) (Vibrio fischeri).